An 89-amino-acid polypeptide reads, in one-letter code: Small ribosomal subunit protein uS15 (89 aa).

This sequence belongs to the universal ribosomal protein uS15 family. Part of the 30S ribosomal subunit. Forms a bridge to the 50S subunit in the 70S ribosome, contacting the 23S rRNA.

Its function is as follows. One of the primary rRNA binding proteins, it binds directly to 16S rRNA where it helps nucleate assembly of the platform of the 30S subunit by binding and bridging several RNA helices of the 16S rRNA. In terms of biological role, forms an intersubunit bridge (bridge B4) with the 23S rRNA of the 50S subunit in the ribosome. This is Small ribosomal subunit protein uS15 from Azotobacter vinelandii (strain DJ / ATCC BAA-1303).